Consider the following 623-residue polypeptide: Bifunctional enzyme CysN/CysC (623 aa).

Positions 1-450 are sulfate adenylyltransferase; the sequence is MQSVIAYLKQ…HVARARIKGQ (450 aa). The tr-type G domain occupies 14-228; that stretch reads KPLLRFITCG…YLEALEPADV (215 aa). The segment at 23-30 is G1; the sequence is GSVDDGKS. 23-30 is a GTP binding site; the sequence is GSVDDGKS. Residues 81-85 form a G2 region; the sequence is GITID. Residues 102–105 form a G3 region; that stretch reads DCPG. GTP-binding positions include 102–106 and 157–160; these read DCPGH and NKMD. Residues 157–160 are G4; that stretch reads NKMD. The tract at residues 194-196 is G5; it reads SAL. The tract at residues 451–623 is adenylyl-sulfate kinase; that stretch reads TPKVLWFTGL…VLSLLGVEGK (173 aa). An ATP-binding site is contributed by 459–466; the sequence is GLSGAGKS. Catalysis depends on Ser533, which acts as the Phosphoserine intermediate.

It in the C-terminal section; belongs to the APS kinase family. This sequence in the N-terminal section; belongs to the TRAFAC class translation factor GTPase superfamily. Classic translation factor GTPase family. CysN/NodQ subfamily. Heterodimer composed of CysD, the smaller subunit, and CysNC.

It carries out the reaction sulfate + ATP + H(+) = adenosine 5'-phosphosulfate + diphosphate. The catalysed reaction is adenosine 5'-phosphosulfate + ATP = 3'-phosphoadenylyl sulfate + ADP + H(+). The protein operates within sulfur metabolism; hydrogen sulfide biosynthesis; sulfite from sulfate: step 1/3. It functions in the pathway sulfur metabolism; hydrogen sulfide biosynthesis; sulfite from sulfate: step 2/3. Functionally, with CysD forms the ATP sulfurylase (ATPS) that catalyzes the adenylation of sulfate producing adenosine 5'-phosphosulfate (APS) and diphosphate, the first enzymatic step in sulfur assimilation pathway. APS synthesis involves the formation of a high-energy phosphoric-sulfuric acid anhydride bond driven by GTP hydrolysis by CysN coupled to ATP hydrolysis by CysD. In terms of biological role, APS kinase catalyzes the synthesis of activated sulfate. The polypeptide is Bifunctional enzyme CysN/CysC (cysNC) (Xylella fastidiosa (strain Temecula1 / ATCC 700964)).